The sequence spans 187 residues: Translation machinery-associated protein 22 (187 aa).

The SUI1 domain occupies 94-165 (VTIKRIERNK…EIEEFILEKY (72 aa)).

It belongs to the DENR family. Interacts with the 40S ribosomal subunit.

The protein resides in the cytoplasm. The polypeptide is Translation machinery-associated protein 22 (tma-22) (Neurospora crassa (strain ATCC 24698 / 74-OR23-1A / CBS 708.71 / DSM 1257 / FGSC 987)).